A 60-amino-acid polypeptide reads, in one-letter code: Small ribosomal subunit protein bS21 (60 aa).

The protein belongs to the bacterial ribosomal protein bS21 family.

In Mycoplasma pneumoniae (strain ATCC 29342 / M129 / Subtype 1) (Mycoplasmoides pneumoniae), this protein is Small ribosomal subunit protein bS21 (rpsU).